The chain runs to 254 residues: Alcohol dehydrogenase (254 aa).

10-33 (FVAGLGGIGLDTSREIVKSGPKNL) contributes to the NAD(+) binding site. Residue serine 138 coordinates substrate. Tyrosine 151 functions as the Proton acceptor in the catalytic mechanism.

Belongs to the short-chain dehydrogenases/reductases (SDR) family. In terms of assembly, homodimer.

It carries out the reaction a primary alcohol + NAD(+) = an aldehyde + NADH + H(+). It catalyses the reaction a secondary alcohol + NAD(+) = a ketone + NADH + H(+). The protein is Alcohol dehydrogenase (Adh) of Drosophila hawaiiensis (Fruit fly).